Here is a 101-residue protein sequence, read N- to C-terminus: Citrinin resistance protein, mitochondrial (101 aa).

It localises to the mitochondrion. Functionally, mitochondrial protein that is involved in citrinin resistance. This Saccharomyces cerevisiae (strain ATCC 204508 / S288c) (Baker's yeast) protein is Citrinin resistance protein, mitochondrial.